A 255-amino-acid polypeptide reads, in one-letter code: MSFYVVIPARYASTRLPAKPLKDIAGKPMIQHVYERASQSQAKAVIIATDDARIQAVAQAFGAQVVMTSASHSSGTDRLQEVTRTLGLAADDIVVNVQGDEPLIPPAVINQVATNLAANTYASVATLSEPIHYLEDFHNPNIVKVVADKAGRALYFSRAPIPWPRDHFAKPDVNVLPDNFPAQRHIGIYSYRVALLDRFVTWPQATLESIESLEQLRVLANSEAIHVAEACAQVPGGVDTEADLQRVKALLEVGQ.

It belongs to the KdsB family.

The protein localises to the cytoplasm. The enzyme catalyses 3-deoxy-alpha-D-manno-oct-2-ulosonate + CTP = CMP-3-deoxy-beta-D-manno-octulosonate + diphosphate. It participates in nucleotide-sugar biosynthesis; CMP-3-deoxy-D-manno-octulosonate biosynthesis; CMP-3-deoxy-D-manno-octulosonate from 3-deoxy-D-manno-octulosonate and CTP: step 1/1. Its pathway is bacterial outer membrane biogenesis; lipopolysaccharide biosynthesis. Activates KDO (a required 8-carbon sugar) for incorporation into bacterial lipopolysaccharide in Gram-negative bacteria. This chain is 3-deoxy-manno-octulosonate cytidylyltransferase, found in Cellvibrio japonicus (strain Ueda107) (Pseudomonas fluorescens subsp. cellulosa).